A 443-amino-acid polypeptide reads, in one-letter code: Tol-Pal system protein TolB (443 aa).

The N-terminal stretch at 1–33 is a signal peptide; the sequence is MKIGIINTKIRTVFSAFACMIAASLVCTMPARA.

It belongs to the TolB family. In terms of assembly, the Tol-Pal system is composed of five core proteins: the inner membrane proteins TolA, TolQ and TolR, the periplasmic protein TolB and the outer membrane protein Pal. They form a network linking the inner and outer membranes and the peptidoglycan layer.

It is found in the periplasm. Part of the Tol-Pal system, which plays a role in outer membrane invagination during cell division and is important for maintaining outer membrane integrity. The protein is Tol-Pal system protein TolB of Brucella canis (strain ATCC 23365 / NCTC 10854 / RM-666).